A 239-amino-acid chain; its full sequence is Ribosomal RNA small subunit methyltransferase G (239 aa).

S-adenosyl-L-methionine is bound by residues G76, F81, 99 to 101, 128 to 129, and R147; these read DSS and IE.

This sequence belongs to the methyltransferase superfamily. RNA methyltransferase RsmG family.

It is found in the cytoplasm. Functionally, specifically methylates the N7 position of a guanine in 16S rRNA. The protein is Ribosomal RNA small subunit methyltransferase G of Prochlorococcus marinus (strain MIT 9515).